Reading from the N-terminus, the 155-residue chain is Small ribosomal subunit protein uS7c (155 aa).

Belongs to the universal ribosomal protein uS7 family. In terms of assembly, part of the 30S ribosomal subunit.

It is found in the plastid. It localises to the chloroplast. Its function is as follows. One of the primary rRNA binding proteins, it binds directly to 16S rRNA where it nucleates assembly of the head domain of the 30S subunit. This is Small ribosomal subunit protein uS7c (rps7) from Sagittaria latifolia (Broadleaf arrowhead).